The sequence spans 196 residues: Endoribonuclease YbeY (196 aa).

Residues H120, H124, and H130 each coordinate Zn(2+).

Belongs to the endoribonuclease YbeY family. Zn(2+) serves as cofactor.

It localises to the cytoplasm. Functionally, single strand-specific metallo-endoribonuclease involved in late-stage 70S ribosome quality control and in maturation of the 3' terminus of the 16S rRNA. This Corynebacterium diphtheriae (strain ATCC 700971 / NCTC 13129 / Biotype gravis) protein is Endoribonuclease YbeY.